Here is a 431-residue protein sequence, read N- to C-terminus: Enolase (431 aa).

Position 167 (Gln167) interacts with (2R)-2-phosphoglycerate. Glu209 (proton donor) is an active-site residue. Residues Asp246, Glu290, and Asp317 each coordinate Mg(2+). (2R)-2-phosphoglycerate contacts are provided by Lys342, Arg371, Ser372, and Lys393. Residue Lys342 is the Proton acceptor of the active site.

This sequence belongs to the enolase family. Component of the RNA degradosome, a multiprotein complex involved in RNA processing and mRNA degradation. Mg(2+) serves as cofactor.

The protein resides in the cytoplasm. The protein localises to the secreted. It localises to the cell surface. It catalyses the reaction (2R)-2-phosphoglycerate = phosphoenolpyruvate + H2O. Its pathway is carbohydrate degradation; glycolysis; pyruvate from D-glyceraldehyde 3-phosphate: step 4/5. In terms of biological role, catalyzes the reversible conversion of 2-phosphoglycerate (2-PG) into phosphoenolpyruvate (PEP). It is essential for the degradation of carbohydrates via glycolysis. The chain is Enolase from Erwinia tasmaniensis (strain DSM 17950 / CFBP 7177 / CIP 109463 / NCPPB 4357 / Et1/99).